We begin with the raw amino-acid sequence, 592 residues long: MELATTQSVLMQIQPTIQRFARMLASVLQLEVEIVDENLCRVAGTGAYGKFLGRQLSGNSRLLRHVLETKTEKVVTQSRFDPLCEGCDSKENCREKAFLGTPVILQDRCVGVISLIAVTHEQQEHISDNLREFSDYVRHISTIFVSKLLEDQGPGDNISKIFATMIDNMDQGVLVVDDENRVQFVNQTALKTLGVVQNNIIGKPIRFRPLTFESNFTHGHMQHIVSWDDKSELIIGQLHNIQGRQLFLMAFHQSHTSFSVANAPDEPHIEQLVGECRVMRQLKRLISRIAPSPSSVMVVGESGTGKEVVARAIHKLSGRRNKPFIAINCAAIPEQLLESELFGYVKGAFTGASANGKTGLIQAANTGTLFLDEIGDMPLMLQAKLLRAIEAREILPIGASSPIQVDIRIISATNQNLAQFIAEGKFREDLFYRLNVIPITLPPLRERQEDIELLVHYFLHLHTRRLGSVYPGIAPDVVEILRKHRWPGNLRELSNLMEYLVNVVPSGEVIDSTLLPPNLLNNGTTEQSDVTEVSEAHLSLDDAGGTALEEMEKQMIREALSRHNSKKQVADELGIGIATLYRKIKKYELLNT.

The PAS domain maps to 158–229 (ISKIFATMID…HMQHIVSWDD (72 aa)). Positions 272 to 502 (LVGECRVMRQ…LSNLMEYLVN (231 aa)) constitute a Sigma-54 factor interaction domain. Residues 300-307 (GESGTGKE) and 364-373 (ANTGTLFLDE) contribute to the ATP site. A DNA-binding region (H-T-H motif) is located at residues 567-585 (KQVADELGIGIATLYRKIK).

In terms of biological role, essential for both formate-dependent and formate-independent uric acid degradation. May be directly involved in the transcription of uacF in response to hypoxanthine, xanthine, and uric acid. The sequence is that of Putative uric acid sigma-54-dependent transcriptional regulator UacR from Escherichia coli (strain K12).